The chain runs to 439 residues: Histidinol dehydrogenase (439 aa).

Residues Tyr132, Gln194, and Asn217 each contribute to the NAD(+) site. 3 residues coordinate substrate: Ser244, Gln266, and His269. Residues Gln266 and His269 each contribute to the Zn(2+) site. Active-site proton acceptor residues include Glu335 and His336. Substrate contacts are provided by His336, Asp369, Glu423, and His428. Asp369 contacts Zn(2+). Position 428 (His428) interacts with Zn(2+).

This sequence belongs to the histidinol dehydrogenase family. The cofactor is Zn(2+).

The enzyme catalyses L-histidinol + 2 NAD(+) + H2O = L-histidine + 2 NADH + 3 H(+). The protein operates within amino-acid biosynthesis; L-histidine biosynthesis; L-histidine from 5-phospho-alpha-D-ribose 1-diphosphate: step 9/9. Catalyzes the sequential NAD-dependent oxidations of L-histidinol to L-histidinaldehyde and then to L-histidine. The sequence is that of Histidinol dehydrogenase (his2) from Schizosaccharomyces pombe (strain 972 / ATCC 24843) (Fission yeast).